The primary structure comprises 242 residues: Basic agglutinin (242 aa).

N-linked (GlcNAc...) asparagine glycosylation is found at Asn45 and Asn220.

This sequence belongs to the leguminous lectin family.

Functionally, lectin. This Psophocarpus tetragonolobus (Winged bean) protein is Basic agglutinin (WBAI).